Consider the following 362-residue polypeptide: Innexin inx1 (362 aa).

Residues 1–28 lie on the Cytoplasmic side of the membrane; sequence MYKLLGSLKSYLKWQDIQTDNAVFRLHN. A helical transmembrane segment spans residues 29 to 49; sequence SFTTVLLLTCSLIITATQYVG. The Extracellular portion of the chain corresponds to 50–110; that stretch reads QPISCIVNGV…DAKKYYTYYQ (61 aa). Residues 111–131 traverse the membrane as a helical segment; the sequence is WVCFVLFFQAMACYTPKFLWN. The Cytoplasmic portion of the chain corresponds to 132–177; the sequence is KFEGGLMRMIVMGLNITICTREEKEAKRDALLDYLIKHVKRHKLYA. Residues 178-198 traverse the membrane as a helical segment; it reads IRYWACEFLCCINIIVQMYLM. Over 199–267 the chain is Extracellular; it reads NRFFDGEFLS…LPLNIVNEKT (69 aa). The chain crosses the membrane as a helical span at residues 268 to 288; that stretch reads YVFIWFWFWILLVLLIGLIVF. The Cytoplasmic portion of the chain corresponds to 289–362; sequence RGCIIFMPKF…VEPSKHDRAK (74 aa).

It belongs to the pannexin family. Heterooligomer of Inx2 and ogre. As to expression, in ovary, expressed in follicle cells. Expressed around the periphery of the embryo during cellular blastoderm formation. Repeating epidermal pattern emerges from stage 11, high levels of expression detected along the borders of each segment from stage 13. At stage 13, expressed in the dorsal branch of the tracheal system. During stage 15, detected in a few cells at each of the branch points of the dorsal trunk and at low levels in cardioblasts. In embryos, also expressed in the salivary gland and the hindgut (at protein level). At stage 17, expressed in the dorsal side of the CNS. Expressed in the imaginal wing disk. Expressed in larval CNS and in tissues outside of the CNS. In pupae, expressed in the CNS and in primary, secondary and tertiary pigment cells of the retina.

The protein resides in the cell membrane. It localises to the cell junction. It is found in the gap junction. The protein localises to the basolateral cell membrane. In terms of biological role, structural component of the gap junctions. Essential for generation and/or maintenance of postembryonic neuroblasts and normal development of optic lobe. This Drosophila melanogaster (Fruit fly) protein is Innexin inx1 (ogre).